We begin with the raw amino-acid sequence, 361 residues long: ETS translocation variant 3-like protein (361 aa).

A DNA-binding region (ETS) is located at residues 39–120 (IQLWHFILEL…KGKRFTYKFN (82 aa)). Residues 178 to 201 (LTGQQTPRGPPETSGDKKGSSSSV) are disordered.

The protein belongs to the ETS family.

Its subcellular location is the nucleus. Its function is as follows. Transcriptional regulator. The polypeptide is ETS translocation variant 3-like protein (ETV3L) (Homo sapiens (Human)).